The following is a 600-amino-acid chain: MNCYKTHECNELRKNDVEKEVTLSGWLYRKRDHGNLIFVDLRDFHGITQLVFNNDKDFFDEISNLKSESVITVTGIVKARTEDTVNSSISTGEIEVIVSNLQVESEVEFHCDEEIAKEERSILASIAGEQEYPENMRFKYRFLDLRREKVRNNIILRSQIISELRRLMIEQGFLDIQTPILTASSPEGARDYLVPSRLNPGKFYALPQAPQIFKQLLMVSGFDKYFQIAPCFRDEDARADRSPGEFYQLDLEMSFVTQEDIFQVIESTLYKVFAKFSRKSVDKDFPRITYKEAMLKYGSDKPDLRNPLLISDVTEIFRDSEFNIFKSNIERGMVVRAIPAPKTAEEPRSFFDKKIEHAQKEFGAKGLGYITFDKDGIAKGPIAKFLDDNRLNSIKEITNVKPGDSVFFASDKENEAATIAGKVRTLLGSELGLIDDDIFKFCWIIDFPYFVYDDKSKKIDFFHNPFSMPHGGLKDLEEKDPLDILAYQYDLVCNGIELSSGAIRNNKLNIMYRAFAIAGYSKEEVDTKFGALVRAFRFGAPPHGGIAPGVDRMVMLLADEPNIREVICFPMNQQGEDVLMGAPSKVDDKHLRELSLKVVE.

Residue glutamate 187 coordinates L-aspartate. Residues 211 to 214 are aspartate; that stretch reads QIFK. L-aspartate is bound by residues arginine 233 and histidine 463. 233-235 contacts ATP; it reads RDE. Glutamate 497 is an ATP binding site. Residue arginine 504 coordinates L-aspartate. 549–552 is a binding site for ATP; it reads GVDR.

The protein belongs to the class-II aminoacyl-tRNA synthetase family. Type 1 subfamily. In terms of assembly, homodimer.

It localises to the cytoplasm. It carries out the reaction tRNA(Asx) + L-aspartate + ATP = L-aspartyl-tRNA(Asx) + AMP + diphosphate. Its function is as follows. Aspartyl-tRNA synthetase with relaxed tRNA specificity since it is able to aspartylate not only its cognate tRNA(Asp) but also tRNA(Asn). Reaction proceeds in two steps: L-aspartate is first activated by ATP to form Asp-AMP and then transferred to the acceptor end of tRNA(Asp/Asn). The sequence is that of Aspartate--tRNA(Asp/Asn) ligase from Wolbachia pipientis subsp. Culex pipiens (strain wPip).